A 341-amino-acid polypeptide reads, in one-letter code: MNLSDFDYFLPDELIAQEPLPERDMSRLMVVRLDGKEFEHRLFKDIVDYLNPGDALVINETKVIPARLVGRKEGTGARIELLLLRRLDSSRWEALVRPGKKAPKGTAVVFGEGLLACRILDSTAYGGRVVEFSFEGLFEEVLERVGVMPLPPYIKKPLLDQQRYQTIYARQAGSAAAPTAGLHFSPGLLSRIREMGVAVIPVLLHVGLGTFRPVRTEDIRRHRMHAEYYEITEEASRAIAETRARGGRVIAVGTTTTRCLESAAEEGGRVRPGSGWTEIFIYPGYRFKVIDGLVTNFHLPKSTLIMMVAALAGRERILAAYREAVGLRYRFFSFGDAMLII.

This sequence belongs to the QueA family. Monomer.

Its subcellular location is the cytoplasm. The enzyme catalyses 7-aminomethyl-7-carbaguanosine(34) in tRNA + S-adenosyl-L-methionine = epoxyqueuosine(34) in tRNA + adenine + L-methionine + 2 H(+). It functions in the pathway tRNA modification; tRNA-queuosine biosynthesis. Transfers and isomerizes the ribose moiety from AdoMet to the 7-aminomethyl group of 7-deazaguanine (preQ1-tRNA) to give epoxyqueuosine (oQ-tRNA). The sequence is that of S-adenosylmethionine:tRNA ribosyltransferase-isomerase from Pelotomaculum thermopropionicum (strain DSM 13744 / JCM 10971 / SI).